A 158-amino-acid polypeptide reads, in one-letter code: Transcription elongation factor GreA (158 aa).

The protein belongs to the GreA/GreB family.

Functionally, necessary for efficient RNA polymerase transcription elongation past template-encoded arresting sites. The arresting sites in DNA have the property of trapping a certain fraction of elongating RNA polymerases that pass through, resulting in locked ternary complexes. Cleavage of the nascent transcript by cleavage factors such as GreA or GreB allows the resumption of elongation from the new 3'terminus. GreA releases sequences of 2 to 3 nucleotides. The protein is Transcription elongation factor GreA of Bacillus licheniformis (strain ATCC 14580 / DSM 13 / JCM 2505 / CCUG 7422 / NBRC 12200 / NCIMB 9375 / NCTC 10341 / NRRL NRS-1264 / Gibson 46).